The primary structure comprises 411 residues: Peptidase T (411 aa).

H78 serves as a coordination point for Zn(2+). The active site involves D80. D140 contacts Zn(2+). The active-site Proton acceptor is the E173. Zn(2+) contacts are provided by E174, D196, and H379.

This sequence belongs to the peptidase M20B family. Requires Zn(2+) as cofactor.

The protein localises to the cytoplasm. It carries out the reaction Release of the N-terminal residue from a tripeptide.. Cleaves the N-terminal amino acid of tripeptides. The sequence is that of Peptidase T from Yersinia pestis bv. Antiqua (strain Antiqua).